The chain runs to 414 residues: Cyclin-B1-3 (414 aa).

This sequence belongs to the cyclin family. Cyclin AB subfamily. In terms of tissue distribution, expressed in roots, stems and flowers.

This Arabidopsis thaliana (Mouse-ear cress) protein is Cyclin-B1-3 (CYCB1-3).